The chain runs to 971 residues: MDQNGASGSHPNRLSQGRGAHARERGATVSAAANRSNIIDEMAKICEADRQTFAIARRTRGHERLAVDNSDFVAVEDLILSYAEPTPEDQVEMIMSDFCSSPTYAEDEDEPSHESEPWFRFRNKRIRTYSRKRDPKSHKAVQNEKRRGSSGLSVQRDLNTSFTSMACDFDASSQKIHEVLLNLSQYFSATATASGPTPVPSQIDLPTEARQDSGDECFNAELENLRDDLLQSGFTFEASFYENEHEQEGPGTMADTIYGDSMQSVPTTRLRLESGKRNVWSDADSTLKKADVEIAENKKLLMGQTQAKNVDIEENTNFILEGIPLSEWLTPMELPEISKDVIKHIPDKKLKLEPSSQKEQKSSKDSNASKVRGASKQSCDINTKNEGTTILDQPNAAEQENLLNDGELLEEFLFNDWQPMQCSNGPSTSKNAIQGPKENINSINLDDKEQPEKQTPNKSQTISSHQLNGIRKKSFKFIEVSEEMKIKGEEFVDKVVSGLYHFSHKCNLRTEEYSDNHSQVMESTQCAEFKSAPSKPIEILDGKETYNAIAKVDVGEINGKFSPLNNDTIAEPEFCGFRTASNKAIPISEKMKIKTAEFMAEFQSKETIQQNDYLVHQPNDKPTSVGLDTALKRSIESSEEMRSKASKLVVVDTTMREPHQPTLDPVCRDLNESQFFGFRTASNKAIEITEAMEKRGAMFLAQSKATDQLNGWQPSDFPDVLPTSPNNEIHSINVENNKAVNTKTVSETEFFGFRTASNKGIVISENTKIKVAQFMSEFQAADASTDSNQPTVISEESRNIDAKFVDEAAAEDSANKPTFCNVQSLKNTSDIEHFKHDFFVEHSAKEEHPLCSQPLVRTPRRSQEIHSSLSQLAGKSPLDQATKKSVIARRNLLSLKRKRKIILSTETSTSCALPTMERFAPKPSSTSTPLADRDLNRSKDCTKNRQDAEDMSPICMQPKKSRRLGLSRSRY.

Polar residues predominate over residues Met-1–Ser-15. Disordered regions lie at residues Met-1–Ser-30, Ser-130–Gln-155, Lys-349–Asn-395, and Met-420–Gln-466. Residues Ser-130 to Lys-139 show a composition bias toward basic residues. A compositionally biased stretch (basic and acidic residues) spans Lys-349–Lys-364. Polar residues-rich tracts occupy residues Ser-375–Asp-392, Met-420–Ala-432, and Lys-453–Gln-466. BRCA2 repeat units follow at residues Ala-570–Ser-604, Asn-671–Ala-705, and Ser-746–Ala-780. The tract at residues Met-916–Tyr-971 is disordered. A compositionally biased stretch (basic and acidic residues) spans Ala-931 to Ala-948. Positions Lys-959–Tyr-971 are enriched in basic residues.

Interacts with Rad9. Interacts with spn-A/Rad51. Interacts with cyclin CycG.

The protein resides in the nucleus. Functionally, involved in and required for double-strand break repair by meiotic and mitotic homologous recombination. During meiosis, has a dual role in the repair of meiotic double-stranded breaks and the efficient activation of the meiotic recombination checkpoint. The polypeptide is Breast cancer type 2 susceptibility protein homolog (Drosophila melanogaster (Fruit fly)).